The primary structure comprises 792 residues: Ribonucleoside-diphosphate reductase large subunit (792 aa).

Positions 1-92 (MHVIKRDGRQ…VSNLHKETKK (92 aa)) constitute an ATP-cone domain. ATP is bound by residues 5-6 (KR), 11-17 (ERVMFDK), T53, and D57. Residue K17 is modified to N6-acetyllysine. The GDP site is built by S202 and S217. The cysteines at positions 218 and 444 are disulfide-linked. Residues 226–228 (DSI), K243, R256, and 263–264 (AG) contribute to the dTTP site. K376 is modified (N6-acetyllysine). Residue N427 participates in GDP binding. N427 serves as the catalytic Proton acceptor. The active-site Cysteine radical intermediate is the C429. Residues E431 and 604–607 (TAST) contribute to the GDP site. The active-site Proton acceptor is the E431. A Phosphothreonine modification is found at T751.

It belongs to the ribonucleoside diphosphate reductase large chain family. Heterodimer of a large and a small subunit. Interacts with RRM2B. Interacts with AHCYL1 which inhibits its activity.

It localises to the cytoplasm. It carries out the reaction a 2'-deoxyribonucleoside 5'-diphosphate + [thioredoxin]-disulfide + H2O = a ribonucleoside 5'-diphosphate + [thioredoxin]-dithiol. Its activity is regulated as follows. Under complex allosteric control mediated by deoxynucleoside triphosphates and ATP binding to separate specificity and activation sites on the M1 subunit. The type of nucleotide bound at the specificity site determines substrate preference. It seems probable that ATP makes the enzyme reduce CDP and UDP, dGTP favors ADP reduction and dTTP favors GDP reduction. Stimulated by ATP and inhibited by dATP binding to the activity site, the dATP inhibition is mediated by AHCYL1 which stabilizes dATP in the site. In terms of biological role, provides the precursors necessary for DNA synthesis. Catalyzes the biosynthesis of deoxyribonucleotides from the corresponding ribonucleotides. The sequence is that of Ribonucleoside-diphosphate reductase large subunit (Rrm1) from Mus musculus (Mouse).